A 1293-amino-acid chain; its full sequence is DNA-directed RNA polymerase subunit beta' (1293 aa).

Zn(2+) contacts are provided by cysteine 60, cysteine 62, cysteine 75, and cysteine 78. The Mg(2+) site is built by aspartate 535, aspartate 537, and aspartate 539. Cysteine 873, cysteine 950, cysteine 957, and cysteine 960 together coordinate Zn(2+).

Belongs to the RNA polymerase beta' chain family. As to quaternary structure, the RNAP catalytic core consists of 2 alpha, 1 beta, 1 beta' and 1 omega subunit. When a sigma factor is associated with the core the holoenzyme is formed, which can initiate transcription. Mg(2+) serves as cofactor. It depends on Zn(2+) as a cofactor.

The catalysed reaction is RNA(n) + a ribonucleoside 5'-triphosphate = RNA(n+1) + diphosphate. DNA-dependent RNA polymerase catalyzes the transcription of DNA into RNA using the four ribonucleoside triphosphates as substrates. This is DNA-directed RNA polymerase subunit beta' from Cutibacterium acnes (strain DSM 16379 / KPA171202) (Propionibacterium acnes).